Here is a 162-residue protein sequence, read N- to C-terminus: MGLETEKADVQLFMDDDSYSRHSSVDYADPDKFVDPGSDRDPHRLNSHLKVGFEDVIAEPVSTHSFDKVWICSHALFEMSKYVIYKFLTVFLAIPLAFAAGILFATLSCLHIWIIMPFVKTCLMVLPSVQTIWKSVTDVVIAPLCTSVGRSFSSVSLQLSHD.

The Cytoplasmic segment spans residues 1–86; sequence MGLETEKADV…FEMSKYVIYK (86 aa). Tyr-19 carries the phosphotyrosine; by SRC modification. Phosphoserine occurs at positions 20 and 23. Phosphotyrosine; by SRC is present on Tyr-27. Positions 87 to 107 form an intramembrane region, helical; the sequence is FLTVFLAIPLAFAAGILFATL. Topologically, residues 108–162 are cytoplasmic; it reads SCLHIWIIMPFVKTCLMVLPSVQTIWKSVTDVVIAPLCTSVGRSFSSVSLQLSHD.

Belongs to the caveolin family. In terms of assembly, monomer or homodimer. Interacts with CAV1; the interaction forms a stable heterooligomeric complex that is required for targeting to lipid rafts and for caveolae formation. Tyrosine phosphorylated forms do not form heterooligomers with the Tyr-19-phosphorylated form existing as a monomer or dimer, and the Tyr-27-form as a monomer only. Interacts (tyrosine phosphorylated form) with the SH2 domain-containing proteins, RASA1, NCK1 and SRC. Interacts (tyrosine phosphorylated form) with INSR, the interaction (Tyr-27-phosphorylated form) is increased on insulin stimulation. Interacts (Tyr-19 phosphorylated form) with MAPK1 (phosphorylated form); the interaction, promoted by insulin, leads to nuclear location and MAPK1 activation. Interacts with STAT3; the interaction is increased on insulin-induced tyrosine phosphorylation leading to STAT activation. In terms of processing, phosphorylated on serine and tyrosine residues. CAV1 promotes phosphorylation on Ser-23 which then targets the complex to the plasma membrane, lipid rafts and caveolae. Phosphorylation on both Tyr-19 and Tyr-27 is required for insulin-induced 'Ser-727' phosphorylation of STAT3 and its activation. Phosphorylation on Tyr-19 is required for insulin-induced phosphorylation of MAPK1 and DNA binding of STAT3. Tyrosine phosphorylation is induced by both EGF and insulin.

The protein localises to the nucleus. It is found in the cytoplasm. Its subcellular location is the golgi apparatus membrane. The protein resides in the cell membrane. It localises to the membrane. The protein localises to the caveola. May act as a scaffolding protein within caveolar membranes. Interacts directly with G-protein alpha subunits and can functionally regulate their activity. Acts as an accessory protein in conjunction with CAV1 in targeting to lipid rafts and driving caveolae formation. Positive regulator of cellular mitogenesis of the MAPK signaling pathway. Required for the insulin-stimulated nuclear translocation and activation of MAPK1 and STAT3, and the subsequent regulation of cell cycle progression. This chain is Caveolin-2 (CAV2), found in Muntiacus muntjak (Barking deer).